The primary structure comprises 196 residues: Zinc finger C2H2 protein ECU03_0940 (196 aa).

2 consecutive C2H2-type zinc fingers follow at residues tyrosine 130–histidine 155 and tyrosine 166–histidine 191.

This is Zinc finger C2H2 protein ECU03_0940 from Encephalitozoon cuniculi (strain GB-M1) (Microsporidian parasite).